The primary structure comprises 77 residues: MKLIIFTGLVLFAIVSLIEAEEESGRVCIPLNGECSKSPDKCCDNINCDCYLRFEKGVQTGRPCFCTEKDVIFERDE.

The first 20 residues, 1–20, serve as a signal peptide directing secretion; sequence MKLIIFTGLVLFAIVSLIEA. Positions 21 to 26 are excised as a propeptide; the sequence is EEESGR.

The protein belongs to the neurotoxin 19 (CSTX) family. 09 (U10-Lctx) subfamily. Contains 4 disulfide bonds. Expressed by the venom gland.

The protein localises to the secreted. The protein is U10-lycotoxin-Ls1a of Lycosa singoriensis (Wolf spider).